We begin with the raw amino-acid sequence, 606 residues long: Threonine--tRNA ligase (606 aa).

Residues 212–503 (DHRKLGVEMK…LIEHTAGELP (292 aa)) form a catalytic region. Positions 304, 355, and 480 each coordinate Zn(2+).

Belongs to the class-II aminoacyl-tRNA synthetase family. In terms of assembly, homodimer. Requires Zn(2+) as cofactor.

Its subcellular location is the cytoplasm. It carries out the reaction tRNA(Thr) + L-threonine + ATP = L-threonyl-tRNA(Thr) + AMP + diphosphate + H(+). In terms of biological role, catalyzes the attachment of threonine to tRNA(Thr) in a two-step reaction: L-threonine is first activated by ATP to form Thr-AMP and then transferred to the acceptor end of tRNA(Thr). Also edits incorrectly charged L-seryl-tRNA(Thr). This chain is Threonine--tRNA ligase, found in Campylobacter curvus (strain 525.92).